The primary structure comprises 111 residues: Gene 81 protein (111 aa).

The protein is Gene 81 protein (81) of Mycobacterium (Mycobacteriophage L5).